A 333-amino-acid chain; its full sequence is Tetraacyldisaccharide 4'-kinase (333 aa).

55–62 (TIGGNGKT) lines the ATP pocket.

The protein belongs to the LpxK family.

It carries out the reaction a lipid A disaccharide + ATP = a lipid IVA + ADP + H(+). It functions in the pathway glycolipid biosynthesis; lipid IV(A) biosynthesis; lipid IV(A) from (3R)-3-hydroxytetradecanoyl-[acyl-carrier-protein] and UDP-N-acetyl-alpha-D-glucosamine: step 6/6. In terms of biological role, transfers the gamma-phosphate of ATP to the 4'-position of a tetraacyldisaccharide 1-phosphate intermediate (termed DS-1-P) to form tetraacyldisaccharide 1,4'-bis-phosphate (lipid IVA). This Blochmanniella floridana protein is Tetraacyldisaccharide 4'-kinase.